Here is a 429-residue protein sequence, read N- to C-terminus: SVP1-like protein 2 (429 aa).

WD repeat units lie at residues 10–48, 50–96, 178–218, and 223–262; these read PVLA…LRTS, DFGA…QVGV, AHTS…RLYE, and IDKA…GTRP. Positions 262–297 are disordered; it reads PITSNGGTAYAAGEPSVTGNNRPSSPYSVASSSGGG.

The protein belongs to the WD repeat PROPPIN family.

Its subcellular location is the vacuole membrane. The protein localises to the cytoplasmic vesicle membrane. Its function is as follows. Involved in mitochondrial or peroxisomal functions and amino acid signaling pathways. The protein is SVP1-like protein 2 (apg-14) of Neurospora crassa (strain ATCC 24698 / 74-OR23-1A / CBS 708.71 / DSM 1257 / FGSC 987).